Reading from the N-terminus, the 129-residue chain is Small ribosomal subunit protein uS12 (129 aa).

The interval 1 to 25 is disordered; it reads MPTYNQLVRFGRKSKTRKTKSPALE. Positions 10–20 are enriched in basic residues; sequence FGRKSKTRKTK. Asp89 is modified (3-methylthioaspartic acid). The interval 110–129 is disordered; it reads RKQGRSRYGAPSKQVAVTKK.

The protein belongs to the universal ribosomal protein uS12 family. As to quaternary structure, part of the 30S ribosomal subunit. Contacts proteins S8 and S17. May interact with IF1 in the 30S initiation complex.

Functionally, with S4 and S5 plays an important role in translational accuracy. Its function is as follows. Interacts with and stabilizes bases of the 16S rRNA that are involved in tRNA selection in the A site and with the mRNA backbone. Located at the interface of the 30S and 50S subunits, it traverses the body of the 30S subunit contacting proteins on the other side and probably holding the rRNA structure together. The combined cluster of proteins S8, S12 and S17 appears to hold together the shoulder and platform of the 30S subunit. In Rickettsia canadensis (strain McKiel), this protein is Small ribosomal subunit protein uS12.